We begin with the raw amino-acid sequence, 844 residues long: DNA mismatch repair protein MutS (844 aa).

Residue 610 to 617 (GPNMGGKS) participates in ATP binding.

Belongs to the DNA mismatch repair MutS family.

Functionally, this protein is involved in the repair of mismatches in DNA. It is possible that it carries out the mismatch recognition step. This protein has a weak ATPase activity. The protein is DNA mismatch repair protein MutS of Francisella tularensis subsp. tularensis (strain WY96-3418).